Here is a 212-residue protein sequence, read N- to C-terminus: uncharacterized protein (212 aa).

Residues glycine 53, glutamate 74, and aspartate 97 each coordinate S-adenosyl-L-methionine.

It belongs to the methyltransferase superfamily. YrrT family.

Functionally, could be a S-adenosyl-L-methionine-dependent methyltransferase. This is an uncharacterized protein from Bacillus thuringiensis (strain Al Hakam).